We begin with the raw amino-acid sequence, 2259 residues long: Protein Ycf2 (2259 aa).

An ATP-binding site is contributed by 1556 to 1563 (GSQETGRS).

Belongs to the Ycf2 family.

It is found in the plastid. The protein localises to the chloroplast stroma. Its function is as follows. Probable ATPase of unknown function. Its presence in a non-photosynthetic plant (Epifagus virginiana) and experiments in tobacco indicate that it has an essential function which is probably not related to photosynthesis. The protein is Protein Ycf2 of Physcomitrium patens (Spreading-leaved earth moss).